Consider the following 685-residue polypeptide: Galactocerebrosidase (685 aa).

An N-terminal signal peptide occupies residues Met1–Ala42. Position 109 (Thr109) interacts with substrate. N-linked (GlcNAc...) asparagine glycosylation is present at Asn143. Substrate contacts are provided by Trp151 and Asn197. The Proton donor/acceptor role is filled by Glu198. The active-site Nucleophile is the Glu274. Cysteines 287 and 394 form a disulfide. The N-linked (GlcNAc...) asparagine glycan is linked to Asn379. Residue Arg396 participates in substrate binding. N-linked (GlcNAc...) asparagine glycosylation is found at Asn403, Asn451, Asn556, Asn559, and Asn602.

The protein belongs to the glycosyl hydrolase 59 family.

It is found in the lysosome. It carries out the reaction a beta-D-galactosyl-(1&lt;-&gt;1')-N-acylsphing-4-enine + H2O = an N-acylsphing-4-enine + D-galactose. The enzyme catalyses beta-D-galactosyl-(1&lt;-&gt;1)-sphing-4-enine + H2O = sphing-4-enine + D-galactose. It catalyses the reaction a D-galactosylceramide + H2O = an N-acyl-sphingoid base + D-galactose. Hydrolyzes the galactose ester bonds of glycolipids such as galactosylceramide and galactosylsphingosine. Enzyme with very low activity responsible for the lysosomal catabolism of galactosylceramide, a major lipid in myelin, kidney and epithelial cells of small intestine and colon. This chain is Galactocerebrosidase, found in Macaca mulatta (Rhesus macaque).